The primary structure comprises 183 residues: Capsid protein (183 aa).

Positions 136 to 183 (NAPILSTLPETTVVRRRGRSPRRRTPSPRRRRSQSPRRRRSQSRESQC) are disordered. Residues 149–176 (VRRRGRSPRRRTPSPRRRRSQSPRRRRS) are compositionally biased toward basic residues. Phosphoserine; by host is present on residues S155, S162, and S170. A 1; half-length repeat occupies 155–161 (SPRRRTP). The tract at residues 155–177 (SPRRRTPSPRRRRSQSPRRRRSQ) is 3 X 8 AA repeats of S-P-R-R-R-[PR]-S-Q. The short motif at 158-175 (RRTPSPRRRRSQSPRRRR) is the Bipartite nuclear localization signal element. 2 consecutive repeat copies span residues 162 to 169 (SPRRRRSQ) and 170 to 177 (SPRRRRSQ). The segment at 177 to 183 (QSRESQC) is RNA binding.

It belongs to the orthohepadnavirus core antigen family. Homodimerizes, then multimerizes. Interacts with cytosol exposed regions of viral L glycoprotein present in the reticulum-to-Golgi compartment. Interacts with human FLNB. Phosphorylated form interacts with host importin alpha; this interaction depends on the exposure of the NLS, which itself depends upon genome maturation and/or phosphorylation of the capsid protein. Interacts with host NUP153. In terms of processing, phosphorylated by host SRPK1, SRPK2, and maybe protein kinase C or GAPDH. Phosphorylation is critical for pregenomic RNA packaging. Protein kinase C phosphorylation is stimulated by HBx protein and may play a role in transport of the viral genome to the nucleus at the late step during the viral replication cycle.

The protein localises to the virion. It localises to the host cytoplasm. Functionally, self assembles to form an icosahedral capsid. Most capsids appear to be large particles with an icosahedral symmetry of T=4 and consist of 240 copies of capsid protein, though a fraction forms smaller T=3 particles consisting of 180 capsid proteins. Entering capsids are transported along microtubules to the nucleus. Phosphorylation of the capsid is thought to induce exposure of nuclear localization signal in the C-terminal portion of the capsid protein that allows binding to the nuclear pore complex via the importin (karyopherin-) alpha and beta. Capsids are imported in intact form through the nuclear pore into the nuclear basket, where it probably binds NUP153. Only capsids that contain the mature viral genome can release the viral DNA and capsid protein into the nucleoplasm. Immature capsids get stuck in the basket. Capsids encapsulate the pre-genomic RNA and the P protein. Pre-genomic RNA is reverse-transcribed into DNA while the capsid is still in the cytoplasm. The capsid can then either be directed to the nucleus, providing more genomes for transcription, or bud through the endoplasmic reticulum to provide new virions. The chain is Capsid protein from Hepatitis B virus genotype B1 subtype adw (isolate Japan/pJDW233/1988) (HBV-B).